We begin with the raw amino-acid sequence, 416 residues long: CCA-adding enzyme (416 aa).

Residues serine 42 and lysine 45 each contribute to the ATP site. 2 residues coordinate CTP: serine 42 and lysine 45. Mg(2+) is bound by residues aspartate 54, aspartate 56, and aspartate 107. 3 residues coordinate ATP: histidine 130, lysine 150, and tyrosine 159. The CTP site is built by histidine 130, lysine 150, and tyrosine 159.

Belongs to the tRNA nucleotidyltransferase/poly(A) polymerase family. Archaeal CCA-adding enzyme subfamily. Homodimer. Mg(2+) serves as cofactor.

It carries out the reaction a tRNA precursor + 2 CTP + ATP = a tRNA with a 3' CCA end + 3 diphosphate. It catalyses the reaction a tRNA with a 3' CCA end + 2 CTP + ATP = a tRNA with a 3' CCACCA end + 3 diphosphate. In terms of biological role, catalyzes the addition and repair of the essential 3'-terminal CCA sequence in tRNAs without using a nucleic acid template. Adds these three nucleotides in the order of C, C, and A to the tRNA nucleotide-73, using CTP and ATP as substrates and producing inorganic pyrophosphate. tRNA 3'-terminal CCA addition is required both for tRNA processing and repair. Also involved in tRNA surveillance by mediating tandem CCA addition to generate a CCACCA at the 3' terminus of unstable tRNAs. While stable tRNAs receive only 3'-terminal CCA, unstable tRNAs are marked with CCACCA and rapidly degraded. This is CCA-adding enzyme from Sulfolobus acidocaldarius (strain ATCC 33909 / DSM 639 / JCM 8929 / NBRC 15157 / NCIMB 11770).